We begin with the raw amino-acid sequence, 373 residues long: Probable protein phosphatase 2C 73 (373 aa).

In terms of domain architecture, PPM-type phosphatase spans 61–354 (LASLFSKRGE…DDMSVVCLFL (294 aa)). Mn(2+) is bound by residues aspartate 97, glycine 98, aspartate 299, and aspartate 345.

It belongs to the PP2C family. The cofactor is Mg(2+). Mn(2+) serves as cofactor.

It catalyses the reaction O-phospho-L-seryl-[protein] + H2O = L-seryl-[protein] + phosphate. It carries out the reaction O-phospho-L-threonyl-[protein] + H2O = L-threonyl-[protein] + phosphate. The chain is Probable protein phosphatase 2C 73 (PPC6-7) from Arabidopsis thaliana (Mouse-ear cress).